The primary structure comprises 292 residues: 33 kDa chaperonin (292 aa).

2 disulfide bridges follow: C238-C240 and C271-C274.

This sequence belongs to the HSP33 family. In terms of processing, under oxidizing conditions two disulfide bonds are formed involving the reactive cysteines. Under reducing conditions zinc is bound to the reactive cysteines and the protein is inactive.

It is found in the cytoplasm. Functionally, redox regulated molecular chaperone. Protects both thermally unfolding and oxidatively damaged proteins from irreversible aggregation. Plays an important role in the bacterial defense system toward oxidative stress. The protein is 33 kDa chaperonin of Alkaliphilus metalliredigens (strain QYMF).